The following is a 1656-amino-acid chain: Probable phospholipid-transporting ATPase DNF3 (1656 aa).

The Lumenal segment spans residues 1–164 (MGIADGQRRR…PRQLYAQFSK (164 aa)). A disordered region spans residues 36-74 (ELEDINESKTFSGSDNNDKDDRDETSGNYAAEEDYEMEE). Basic and acidic residues predominate over residues 51–60 (NNDKDDRDET). The helical transmembrane segment at 165–185 (LANTYFFIVAVLQMIPGWSTT) threads the bilayer. The Cytoplasmic segment spans residues 186–451 (GTYTTIIPLC…RTKAPKLQRK (266 aa)). A helical transmembrane segment spans residues 452-472 (INMIIVFMVFVVATISLFSYL). Topologically, residues 473–495 (GHVLHKKKYIDQNKAWYLFQADA) are lumenal. A helical transmembrane segment spans residues 496–516 (GVAPTIMSFIIMYNTVIPLSL). Residues 517-1157 (YVTMEIIKVV…ISKMNAVSQE (641 aa)) are Cytoplasmic-facing. Asp566 functions as the 4-aspartylphosphate intermediate in the catalytic mechanism. Positions 566, 567, and 568 each coordinate ATP. Mg(2+) is bound at residue Asp566. Thr568 is a binding site for Mg(2+). Ser627 carries the post-translational modification Phosphoserine. ATP is bound by residues Glu765, Phe813, Ser815, Lys818, Lys838, Arg1034, Thr1035, Thr1114, Gly1115, Asp1116, 1167-1174 (VVVIDGAT), Arg1202, and Lys1208. A helical membrane pass occupies residues 1158-1178 (VDSGNIAHCVVVIDGATMAMF). At 1179–1318 (EGNPTYMSVF…MFSGSSLYEP (140 aa)) the chain is on the lumenal side. Position 1229 (Asp1229) interacts with Mg(2+). 2 residues coordinate ATP: Asn1232 and Asp1233. Residues 1319–1339 (WSLSMFNTLFTSLPVLCIGMF) traverse the membrane as a helical segment. At 1340 to 1365 (EKDLKPMTLLTVPELYSYGRLSQGFN) the chain is on the cytoplasmic side. Residues 1366–1386 (WLIFMEWVILATTNSLIITFL) traverse the membrane as a helical segment. The Lumenal portion of the chain corresponds to 1387–1395 (NVVMWGMSS). A helical membrane pass occupies residues 1396–1416 (LSDNTMYPLGLINFTAIVALI). Residues 1417–1432 (NVKSQFVEMHNRNWLA) are Cytoplasmic-facing. Residues 1433–1453 (FTSVVLSCGGWLVWCCALPIL) form a helical membrane-spanning segment. Residues 1454–1473 (NNTDQIYDVAYGFYNHFGKD) lie on the Lumenal side of the membrane. Residues 1474-1494 (ITFWCTSLVLALLPITLDIVY) form a helical membrane-spanning segment. Residues 1495–1656 (KTFKVMIWPS…IIQARLKDLE (162 aa)) are Cytoplasmic-facing. The disordered stretch occupies residues 1554-1576 (PRTNSRASAKTHNSSIYSMSNGN).

Belongs to the cation transport ATPase (P-type) (TC 3.A.3) family. Type IV subfamily. Component of a flippase complex consisting of DNF3 and YNR048W/CRF1. Interacts with YNR048W/CRF1; the interaction is direct and required for proper expression and endoplasmic reticulum (ER) export of either partner. Mg(2+) is required as a cofactor.

Its subcellular location is the golgi apparatus. It is found in the trans-Golgi network membrane. The protein resides in the endosome membrane. It catalyses the reaction ATP + H2O + phospholipidSide 1 = ADP + phosphate + phospholipidSide 2.. The enzyme catalyses a 1,2-diacyl-sn-glycero-3-phosphocholine(out) + ATP + H2O = a 1,2-diacyl-sn-glycero-3-phosphocholine(in) + ADP + phosphate + H(+). It carries out the reaction a 1,2-diacyl-sn-glycero-3-phosphoethanolamine(out) + ATP + H2O = a 1,2-diacyl-sn-glycero-3-phosphoethanolamine(in) + ADP + phosphate + H(+). Its function is as follows. Catalytic component of a P4-ATPase flippase complex which catalyzes the hydrolysis of ATP coupled to the transport of phosphatidylcholine and small amounts of phosphatidylethanolamine from the lumen to the cytosolic leaflet of the trans-Golgi network and ensures the maintenance of asymmetric distribution of phospholipids. May be involved in transport from early endosomes to the trans-Golgi network (TGN). The chain is Probable phospholipid-transporting ATPase DNF3 (DNF3) from Saccharomyces cerevisiae (strain ATCC 204508 / S288c) (Baker's yeast).